The following is a 466-amino-acid chain: uncharacterized protein (466 aa).

Residues 1 to 22 are disordered; sequence MKKNNERVNTNPSLISKSYNMK. Residues 7–19 are compositionally biased toward polar residues; that stretch reads RVNTNPSLISKSY. Residues Ser40 and Ser42 each carry the phosphoserine modification. An RRM domain is found at 108-183; the sequence is YFVHMDNISP…RLISATITNH (76 aa). A disordered region spans residues 186 to 207; the sequence is RLPNAEHLESSTKTKDESQDKD. Over residues 188–207 the composition is skewed to basic and acidic residues; sequence PNAEHLESSTKTKDESQDKD. The 160-residue stretch at 209-368 folds into the CID domain; the sequence is LTKLDRAKLE…RAWRNFSGNT (160 aa). Ser371 carries the post-translational modification Phosphoserine. Positions 425–436 are enriched in low complexity; it reads STETSSSSSPQP. Positions 425–448 are disordered; sequence STETSSSSSPQPTEERKAKFKPSF.

The protein localises to the nucleus. Its subcellular location is the cytoplasm. This is an uncharacterized protein from Schizosaccharomyces pombe (strain 972 / ATCC 24843) (Fission yeast).